The following is a 321-amino-acid chain: Solute carrier family 25 member 33 (321 aa).

Solcar repeat units lie at residues 9-118 (ENTL…AKEQ), 126-213 (NSNI…LKKY), and 231-315 (TNFF…IVYL). Transmembrane regions (helical) follow at residues 12-32 (LLHLFAGGCGGTVGAIFTCPL), 49-65 (VYYPQVHLGTISGAGVV), 121-141 (GVFVPNSNIVHVFSAGSAAFV), 190-210 (LTASYAGISETIICFAIYESL), 233-253 (FFGLMAAAALSKGCASCVAYP), and 298-318 (QIPNTAIVLSTYELIVYLLED).

Belongs to the mitochondrial carrier (TC 2.A.29) family.

The protein localises to the mitochondrion inner membrane. The catalysed reaction is UTP(in) + UDP(out) = UTP(out) + UDP(in). It carries out the reaction dUTP(out) + UTP(in) = dUTP(in) + UTP(out). It catalyses the reaction 5-methyl-UTP(out) + UTP(in) = 5-methyl-UTP(in) + UTP(out). The enzyme catalyses 5-methyl-UDP(out) + UTP(in) = 5-methyl-UDP(in) + UTP(out). The catalysed reaction is UTP(in) + CTP(out) = UTP(out) + CTP(in). It carries out the reaction CDP(out) + UTP(in) = CDP(in) + UTP(out). It catalyses the reaction dCTP(out) + UTP(in) = dCTP(in) + UTP(out). The enzyme catalyses dCDP(out) + UTP(in) = dCDP(in) + UTP(out). The catalysed reaction is UTP(in) + GTP(out) = UTP(out) + GTP(in). It carries out the reaction UTP(in) + GDP(out) = UTP(out) + GDP(in). It catalyses the reaction dGTP(out) + UTP(in) = dGTP(in) + UTP(out). The enzyme catalyses dGDP(out) + UTP(in) = dGDP(in) + UTP(out). The catalysed reaction is ITP(out) + UTP(in) = ITP(in) + UTP(out). Mitochondrial transporter that imports/exports pyrimidine nucleotides into and from mitochondria. Selectively transports uridine, thymidine, guanosine, cytosine and inosine (deoxy)nucleoside di- and triphosphates by an antiport mechanism. May import (deoxy)nucleoside triphosphates in exchange for intramitochondrial (deoxy)nucleoside diphosphates, thus providing precursors necessary for de novo synthesis of mitochondrial DNA and RNA while exporting products of their catabolism. Participates in mitochondrial genome maintenance, regulation of mitochondrial membrane potential and mitochondrial respiration. Upon INS or IGF1 stimulation regulates cell growth and proliferation by controlling mitochondrial DNA replication and transcription, the ratio of mitochondria-to nuclear-encoded components of the electron transport chain resulting in control of mitochondrial ROS production. Participates in dendritic cell endocytosis and may associate with mitochondrial oxidative phosphorylation. In Bos taurus (Bovine), this protein is Solute carrier family 25 member 33 (SLC25A33).